Consider the following 409-residue polypeptide: Growth-regulating factor 8 (409 aa).

2 stretches are compositionally biased toward gly residues: residues 1–10 and 27–36; these read MLSSCGGHGH and QQGGGGGGGQ. Residues 1-81 are disordered; sequence MLSSCGGHGH…GGGGQMLSFS (81 aa). Positions 56-68 are enriched in low complexity; the sequence is SSSSFLGSTSSSC. In terms of domain architecture, QLQ spans 107–142; it reads PFTPTQWMELEHQALIYKHIAANVSVPSSLLLPIRR. Residues 158-202 enclose the WRC domain; that stretch reads DVEPRRCRRTDGKKWRCSRDAVGDQKYCERHINRGRHRSRKHVEG. 2 consecutive short sequence motifs (bipartite nuclear localization signal) follow at residues 163-173 and 191-198; these read RCRRTDGKKWR and RGRHRSRK. Positions 221–242 are disordered; sequence SSRGHTVARQKQVKGSAATVSD.

Belongs to the GRF family.

The protein localises to the nucleus. In terms of biological role, transcription activator that plays a regulatory role in gibberellin-induced stem elongation. The protein is Growth-regulating factor 8 (GRF8) of Oryza sativa subsp. japonica (Rice).